Consider the following 346-residue polypeptide: Histone PARylation factor 1 (346 aa).

Methionine 1 carries the post-translational modification N-acetylmethionine. Positions 1-10 (MVGGGAKRRL) are enriched in basic residues. Residues 1–29 (MVGGGAKRRLRGEGPQCEKPVDMKKSKSC) are disordered. At lysine 19 the chain carries N6-acetyllysine. Residues 19–29 (KPVDMKKSKSC) show a composition bias toward basic and acidic residues. Serine 97 carries the post-translational modification ADP-ribosylserine. Residues lysine 186 and lysine 233 each carry the N6-acetyllysine modification. Residue aspartate 235 is modified to PolyADP-ribosyl aspartic acid. The residue at position 238 (tyrosine 238) is an ADP-ribosyltyrosine. Residue glutamate 240 is modified to PolyADP-ribosyl glutamic acid. Residues 242 to 346 (PETDASLRRI…SQDDVDQLAA (105 aa)) are interaction with PARP1. Glutamate 284 serves as the catalytic Proton donor.

This sequence belongs to the HPF1 family. In terms of assembly, interacts with PARP1 (via the PARP catalytic domain). Interacts with PARP2 (via the PARP catalytic domain). Interacts with core nucleosomes in a PARP1- and PARP2-dependent manner.

It is found in the chromosome. It localises to the nucleus. Cofactor for serine ADP-ribosylation that confers serine specificity on PARP1 and PARP2 and plays a key role in DNA damage response. Initiates the repair of double-strand DNA breaks: recruited to DNA damage sites by PARP1 and PARP2 and switches the amino acid specificity of PARP1 and PARP2 from aspartate or glutamate to serine residues, licensing serine ADP-ribosylation of target proteins. Serine ADP-ribosylation of target proteins, such as histones, promotes decompaction of chromatin and the recruitment of repair factors leading to the reparation of DNA strand breaks. Serine ADP-ribosylation of proteins constitutes the primary form of ADP-ribosylation of proteins in response to DNA damage. HPF1 acts by completing the active site of PARP1 and PARP2: forms a composite active site composed of residues from HPF1 and PARP1 or PARP2. While HPF1 promotes the initiation of serine ADP-ribosylation, it restricts the polymerase activity of PARP1 and PARP2 in order to limit the length of poly-ADP-ribose chains. HPF1 also promotes tyrosine ADP-ribosylation, probably by conferring tyrosine specificity on PARP1. The polypeptide is Histone PARylation factor 1 (Bos taurus (Bovine)).